The sequence spans 227 residues: MNNYLLKCENINKFYQEGENQTQVLKGVSFSMEPAELVAIVGSSGSGKSTLLHTLGGLDQPSSGEVFINGQSLQKASANELAALRNRYLGFVYQFHHLMADFTALENVMMPMLIGHQNKTEAKDRAEKMLSAVGLSHRITHRPSALSGGERQRVAIARALVNNPSLVLADEPTGNLDHKTTESIFELIQQLNQEQNIAFLLVTHDMGLAEKLSRRLVMQDGLLKEGA.

The ABC transporter domain maps to Leu-6–Ala-227. Residue Gly-42–Ser-49 participates in ATP binding.

The protein belongs to the ABC transporter superfamily. Lipoprotein translocase (TC 3.A.1.125) family. As to quaternary structure, the complex is composed of two ATP-binding proteins (LolD) and two transmembrane proteins (LolC and LolE).

It localises to the cell inner membrane. Functionally, part of the ABC transporter complex LolCDE involved in the translocation of mature outer membrane-directed lipoproteins, from the inner membrane to the periplasmic chaperone, LolA. Responsible for the formation of the LolA-lipoprotein complex in an ATP-dependent manner. This Haemophilus influenzae (strain 86-028NP) protein is Lipoprotein-releasing system ATP-binding protein LolD.